The primary structure comprises 306 residues: Porphobilinogen deaminase (306 aa).

At Cys-244 the chain carries S-(dipyrrolylmethanemethyl)cysteine.

Belongs to the HMBS family. As to quaternary structure, monomer. It depends on dipyrromethane as a cofactor.

The enzyme catalyses 4 porphobilinogen + H2O = hydroxymethylbilane + 4 NH4(+). The protein operates within porphyrin-containing compound metabolism; protoporphyrin-IX biosynthesis; coproporphyrinogen-III from 5-aminolevulinate: step 2/4. Tetrapolymerization of the monopyrrole PBG into the hydroxymethylbilane pre-uroporphyrinogen in several discrete steps. In Streptococcus sanguinis (strain SK36), this protein is Porphobilinogen deaminase.